Here is a 288-residue protein sequence, read N- to C-terminus: Acetyl-coenzyme A carboxylase carboxyl transferase subunit beta (288 aa).

The 255-residue stretch at 34 to 288 (LFAKCPACKH…HLVAFHGGVS (255 aa)) folds into the CoA carboxyltransferase N-terminal domain. Residues C38, C41, C56, and C59 each contribute to the Zn(2+) site. A C4-type zinc finger spans residues 38 to 59 (CPACKHMIYQKDLGPAKICPTC).

The protein belongs to the AccD/PCCB family. Acetyl-CoA carboxylase is a heterohexamer composed of biotin carboxyl carrier protein (AccB), biotin carboxylase (AccC) and two subunits each of ACCase subunit alpha (AccA) and ACCase subunit beta (AccD). Zn(2+) serves as cofactor.

Its subcellular location is the cytoplasm. The enzyme catalyses N(6)-carboxybiotinyl-L-lysyl-[protein] + acetyl-CoA = N(6)-biotinyl-L-lysyl-[protein] + malonyl-CoA. Its pathway is lipid metabolism; malonyl-CoA biosynthesis; malonyl-CoA from acetyl-CoA: step 1/1. In terms of biological role, component of the acetyl coenzyme A carboxylase (ACC) complex. Biotin carboxylase (BC) catalyzes the carboxylation of biotin on its carrier protein (BCCP) and then the CO(2) group is transferred by the transcarboxylase to acetyl-CoA to form malonyl-CoA. The sequence is that of Acetyl-coenzyme A carboxylase carboxyl transferase subunit beta from Streptococcus equi subsp. zooepidemicus (strain MGCS10565).